A 165-amino-acid chain; its full sequence is uncharacterized protein (165 aa).

This is an uncharacterized protein from Saccharomyces cerevisiae (strain ATCC 204508 / S288c) (Baker's yeast).